The following is a 154-amino-acid chain: Myoglobin (154 aa).

The 147-residue stretch at 2–148 folds into the Globin domain; sequence VLSDAEWQLV…FRKDIAAKYK (147 aa). Ser4 carries the phosphoserine modification. His65 is a nitrite binding site. Position 65 (His65) interacts with O2. Phosphothreonine is present on Thr68. A heme b-binding site is contributed by His94.

Belongs to the globin family. Monomeric.

It localises to the cytoplasm. Its subcellular location is the sarcoplasm. The catalysed reaction is Fe(III)-heme b-[protein] + nitric oxide + H2O = Fe(II)-heme b-[protein] + nitrite + 2 H(+). It catalyses the reaction H2O2 + AH2 = A + 2 H2O. Functionally, monomeric heme protein which primary function is to store oxygen and facilitate its diffusion within muscle tissues. Reversibly binds oxygen through a pentacoordinated heme iron and enables its timely and efficient release as needed during periods of heightened demand. Depending on the oxidative conditions of tissues and cells, and in addition to its ability to bind oxygen, it also has a nitrite reductase activity whereby it regulates the production of bioactive nitric oxide. Under stress conditions, like hypoxia and anoxia, it also protects cells against reactive oxygen species thanks to its pseudoperoxidase activity. This chain is Myoglobin (MB), found in Megaptera novaeangliae (Humpback whale).